The following is a 172-amino-acid chain: Zinc finger protein 580 (172 aa).

Residues 1–93 are disordered; that stretch reads MLLLPPRPPH…GEPGPRKGYS (93 aa). Residues 19-30 are compositionally biased toward pro residues; the sequence is MDPPPPKAPPFP. Lys-31 is covalently cross-linked (Glycyl lysine isopeptide (Lys-Gly) (interchain with G-Cter in SUMO2)). A compositionally biased stretch (low complexity) spans 31–44; the sequence is KAEGPSSTPSSAAG. Pro residues predominate over residues 75 to 86; the sequence is GPPQREAPPGEP. The segment at 92 to 114 adopts a C2H2-type 1 zinc-finger fold; that stretch reads YSCPECARVFASPLRLQSHRVSH. Lys-118 participates in a covalent cross-link: Glycyl lysine isopeptide (Lys-Gly) (interchain with G-Cter in SUMO2). C2H2-type zinc fingers lie at residues 120–142 and 150–172; these read FTCG…RATH and HTCP…VRLH.

As to quaternary structure, interacts with SMAD2. In terms of tissue distribution, expressed in endothelial cells.

The protein resides in the nucleus. Involved in the regulation of endothelial cell proliferation and migration. Mediates H(2)O(2)-induced leukocyte chemotaxis by elevating interleukin-8 production and may play a role in inflammation. May be involved in transcriptional regulation. The sequence is that of Zinc finger protein 580 (ZNF580) from Homo sapiens (Human).